The following is a 436-amino-acid chain: Autophagy-related protein 18 (436 aa).

WD repeat units follow at residues 192–232 (AHRS…KLYQ), 237–276 (SMPS…SSPD), and 374–414 (GNNG…GGEG). Positions 233–237 (FRRGS) match the L/FRRG motif motif. Positions 268-315 (LSHPTSSPDTSPSSPVGRDRSLSQSSSGYSPDRGDLTGDVGSSDFPAR) are disordered. Positions 269–282 (SHPTSSPDTSPSSP) are enriched in low complexity.

This sequence belongs to the WD repeat PROPPIN family. In terms of assembly, component of the PI(3,5)P2 regulatory complex.

It localises to the preautophagosomal structure membrane. The protein resides in the vacuole membrane. The protein localises to the endosome membrane. Its function is as follows. The PI(3,5)P2 regulatory complex regulates both the synthesis and turnover of phosphatidylinositol 3,5-bisphosphate (PtdIns(3,5)P2). Necessary for proper vacuole morphology. Plays an important role in osmotically-induced vacuole fragmentation. Required for cytoplasm to vacuole transport (Cvt) vesicle formation, pexophagy and starvation-induced autophagy. Involved in correct atg9 trafficking to the pre-autophagosomal structure. Might also be involved in premeiotic DNA replication. This Aspergillus fumigatus (strain ATCC MYA-4609 / CBS 101355 / FGSC A1100 / Af293) (Neosartorya fumigata) protein is Autophagy-related protein 18 (atg18).